Reading from the N-terminus, the 3010-residue chain is Genome polyprotein (3010 aa).

Ser2 bears the N-acetylserine; by host mark. Residues 2–23 (STNPKPQRKTKRNTNRRPQDVK) are interaction with STAT1. The segment at 2–58 (STNPKPQRKTKRNTNRRPQDVKFPGGGQIVGGVYLLPRRGPRLGVRATRKTSERSQP) is interaction with EIF2AK2/PKR. Residues 2-59 (STNPKPQRKTKRNTNRRPQDVKFPGGGQIVGGVYLLPRRGPRLGVRATRKTSERSQPR) form an interaction with DDX3X region. The segment at 2–75 (STNPKPQRKT…PKARRPEGRT (74 aa)) is disordered. The Cytoplasmic portion of the chain corresponds to 2–168 (STNPKPQRKT…EDGVNYATGN (167 aa)). 2 short sequence motifs (nuclear localization signal) span residues 5–13 (PKPQRKTKR) and 38–43 (PRRGPR). A compositionally biased stretch (basic residues) spans 7–16 (PQRKTKRNTN). Positions 32–47 (GGVYLLPRRGPRLGVR) are enriched in low complexity. Position 53 is a phosphoserine; by host (Ser53). 2 short sequence motifs (nuclear localization signal) span residues 58–64 (PRGRRQP) and 66–71 (PKARRP). The span at 58–68 (PRGRRQPIPKA) shows a compositional bias: basic residues. Phosphoserine; by host is present on Ser99. The important for endoplasmic reticulum and mitochondrial localization stretch occupies residues 112-152 (PRRRSRNLGKVIDTLTCGFADLMGYIPLVGAPLGGAARALA). Residue Ser116 is modified to Phosphoserine; by host PKA. An interaction with APOA2 region spans residues 122–173 (VIDTLTCGFADLMGYIPLVGAPLGGAARALAHGVRVLEDGVNYATGNLPGCS). The interval 164-167 (YATG) is important for lipid droplets localization. Residues 169-189 (LPGCSFSIFLLALLSCLTIPA) form a helical membrane-spanning segment. Residues 178 to 191 (LLALLSCLTIPASA) constitute a propeptide, ER anchor for the core protein, removed in mature form by host signal peptidase. Residues 190 to 358 (SAYEVRNVSG…AGAHWGVLAG (169 aa)) lie on the Lumenal side of the membrane. 3 N-linked (GlcNAc...) asparagine; by host glycosylation sites follow: Asn196, Asn209, and Asn234. An important for fusion region spans residues 265–296 (LVGAAALCSAMYVGDLCGSVFLVSQLFTFSPR). Asn305 carries an N-linked (GlcNAc...) asparagine; by host glycan. The helical transmembrane segment at 359–379 (LAYYSMVGNWAKVLIVMLLFA) threads the bilayer. Residues 380 to 725 (GVDGHTHVTG…WEYILLLFLL (346 aa)) lie on the Lumenal side of the membrane. Thr385 and Thr396 each carry an O-linked (Hex...) threonine; by host glycan. The segment at 385–411 (THVTGGRVASSTQSLVSWLSQGPSQKI) is HVR1. O-linked (Hex...) serine; by host glycans are attached at residues Ser401 and Ser404. Asn417, Asn423, Asn430, and Asn448 each carry an N-linked (GlcNAc...) (high mannose) asparagine; by host glycan. Cystine bridges form between Cys429–Cys552, Cys452–Cys459, Cys486–Cys494, and Cys503–Cys508. Thr473 is a glycosylation site (O-linked (Hex...) threonine; by host). The interval 474–482 (HDMPESSDQ) is HVR2. Positions 480–493 (SDQRPYCWHYAPRP) are CD81-binding 1. O-linked (Hex...) threonine; by host glycosylation occurs at Thr518. Asn532 carries N-linked (GlcNAc...) (high mannose) asparagine; by host glycosylation. The segment at 544 to 551 (PPQGNWFG) is CD81-binding 2. Asn556 is a glycosylation site (N-linked (GlcNAc...) (high mannose) asparagine; by host). Residues Cys564 and Cys569 are joined by a disulfide bond. N-linked (GlcNAc...) (high mannose) asparagine; by host glycosylation occurs at Asn576. Intrachain disulfides connect Cys581-Cys585, Cys597-Cys620, and Cys607-Cys644. N-linked (GlcNAc...) (high mannose) asparagine; by host glycosylation is found at Asn623 and Asn645. A disulfide bridge connects residues Cys652 and Cys677. The interval 660–671 (SELSPLLLSTTE) is EIF2AK2/eIF2-alpha phosphorylation homology domain (PePHD). The chain crosses the membrane as a helical span at residues 726–746 (LADARVCACLWMMLLIAQAEA). Residues 747 to 757 (TLENLVVLNAA) are Lumenal-facing. Residues 758–778 (SVAGAHGLLSFLVFFCAAWYI) traverse the membrane as a helical segment. The Cytoplasmic portion of the chain corresponds to 779–781 (KGR). Residues 782 to 803 (LVPGAAYALYGVWPLLLLLLAL) traverse the membrane as a helical segment. The Lumenal portion of the chain corresponds to 804-813 (PPRAYAMDRE). A helical transmembrane segment spans residues 814-834 (MAASCGGAVFVGLVLLTLSPY). Over 835 to 838 (YKVF) the chain is Cytoplasmic. Residues 839 to 859 (LARLIWWLQYFITRAEAHLQV) traverse the membrane as a helical segment. Residues 860–881 (WVPPLNVRGGRDAIILLTCAVH) are Lumenal-facing. A helical membrane pass occupies residues 882-902 (PELIFDITKLLLAILGPLMVL). In terms of domain architecture, Peptidase C18 spans 903–1026 (QAGITRVPYF…SFGEQGWRLL (124 aa)). The Cytoplasmic segment spans residues 903-1657 (QAGITRVPYF…CMSADLEVVT (755 aa)). Positions 904–1206 (AGITRVPYFV…PVESMETTMR (303 aa)) are protease NS2-3. Cys922 is lipidated: S-palmitoyl cysteine; by host. Residues 929–949 (AGGHYVQMAFMKLAALTGTYV) are interaction with host SCPS1. Catalysis depends on for protease NS2 activity; shared with dimeric partner residues His952, Glu972, and Cys993. A Peptidase S29 domain is found at 1027–1208 (APITAYSQQT…ESMETTMRSP (182 aa)). Residues His1083 and Asp1107 each act as charge relay system; for serine protease NS3 activity in the active site. Residues Cys1123 and Cys1125 each coordinate Zn(2+). Catalysis depends on Ser1165, which acts as the Charge relay system; for serine protease NS3 activity. 2 residues coordinate Zn(2+): Cys1171 and His1175. Positions 1217-1369 (PAVPQTFQVA…PNIEEVALSN (153 aa)) constitute a Helicase ATP-binding domain. 1230-1237 (APTGSGKS) contributes to the ATP binding site. Mg(2+)-binding residues include Ser1237 and Glu1317. Positions 1316 to 1319 (DECH) match the DECH box motif. The interval 1486 to 1497 (QRRGRTGRGRSG) is RNA-binding. The chain crosses the membrane as a helical span at residues 1658–1678 (STWVLVGGVLAALAAYCLTTG). The interval 1679–1690 (SVVIVGRIILSG) is NS3-binding. Residues 1679–1805 (SVVIVGRIIL…SITSPLTTQN (127 aa)) are Cytoplasmic-facing. A helical membrane pass occupies residues 1806–1826 (TLLFNILGGWVAAQLAPPSAA). Over 1827 to 1828 (SA) the chain is Lumenal. Residues 1829–1849 (FVGAGIAGAAVGSIGLGKVLV) traverse the membrane as a helical segment. The segment at 1833 to 1861 (GIAGAAVGSIGLGKVLVDILAGYGAGVAG) is glycine zipper. Position 1850 (Asp1850) is a topological domain, cytoplasmic. A helical membrane pass occupies residues 1851–1871 (ILAGYGAGVAGALVAFKVMSG). The Lumenal portion of the chain corresponds to 1872–1881 (EMPSTEDLVN). Residues 1882-1902 (LLPAILSPGALVVGVVCAAIL) form a helical membrane-spanning segment. Topologically, residues 1903 to 1972 (RRHVGPGEGA…WINEDCSTPC (70 aa)) are cytoplasmic. S-palmitoyl cysteine; by host attachment occurs at residues Cys1968 and Cys1972. The stretch at 1973 to 2002 (SGSWLKDVWDWICTVLSDFKTWLQSKLLPR) is an intramembrane region. The segment at 1978–1998 (KDVWDWICTVLSDFKTWLQSK) is membrane-binding. Topologically, residues 2003–2989 (LPGLPFLSCQ…YHSLSRARPR (987 aa)) are cytoplasmic. Residues 2005 to 2221 (GLPFLSCQRG…KATCTTHHDS (217 aa)) are RNA-binding. Zn(2+) is bound by residues Cys2011, Cys2029, Cys2031, and Cys2052. An FKBP8-binding region spans residues 2120 to 2208 (EFFTEVDGVR…ASSSASQLSA (89 aa)). The interval 2120–2332 (EFFTEVDGVR…PIPPPRRKRT (213 aa)) is transcriptional activation. Residues 2135-2139 (PVCKP) form an interaction with non-structural protein 4A region. Residues 2187–2219 (KRRLARGSPPSLASSSASQLSAPSLKATCTTHH) are disordered. The interval 2189 to 2441 (RLARGSPPSL…PCAAEESKLP (253 aa)) is interaction with host SKP2. Ser2194 carries the post-translational modification Phosphoserine; by host; in p56. Low complexity predominate over residues 2194-2211 (SPPSLASSSASQLSAPSL). A phosphoserine; by host; in p58 mark is found at Ser2197, Ser2201, Ser2204, Ser2207, and Ser2210. 2 ISDR regions span residues 2206-2245 (LSAPSLKATCTTHHDSPDADLIEANLLWRQEMGGNITRVE) and 2210-2249 (SLKATCTTHHDSPDADLIEANLLWRQEMGGNITRVESENK). Residues 2210–2275 (SLKATCTTHH…REISVPAEIL (66 aa)) form an EIF2AK2/PKR-binding region. The NS4B-binding stretch occupies residues 2249 to 2306 (KVVILDSFDPIRAVEDEREISVPAEILRKPRKFPPALPIWARPDYNPPLLESWKDPDY). The SH3-binding motif lies at 2322–2325 (PPIP). The Nuclear localization signal motif lies at 2326-2334 (PPRRKRTVV). Residues 2332–2441 (TVVLTESTVS…PCAAEESKLP (110 aa)) form an interaction with host IFI27 region. Lys2350 is covalently cross-linked (Glycyl lysine isopeptide (Lys-Gly) (interchain with G-Cter in ubiquitin)). Residues 2351 to 2365 (TFGSSGSSAVDSGTA) are compositionally biased toward polar residues. The segment at 2351 to 2408 (TFGSSGSSAVDSGTATGPPDQASDDGDKGSDVESYSSMPPLEGEPGDPDLSDGSWSTV) is disordered. The tract at residues 2354–2377 (SSGSSAVDSGTATGPPDQASDDGD) is V3. Phosphoserine; by host is present on residues Ser2448 and Ser2461. Positions 2633–2751 (PMGFSYDTRC…ICESAGTQED (119 aa)) constitute a RdRp catalytic domain. Mg(2+) is bound by residues Asp2639, Asp2737, and Asp2738. A helical membrane pass occupies residues 2990 to 3010 (WFMLCLLLLSVGVGIYLLPNR).

The protein belongs to the hepacivirus polyprotein family. Homooligomer. Interacts with E1 (via C-terminus). Interacts with the non-structural protein 5A. Interacts (via N-terminus) with host STAT1 (via SH2 domain); this interaction results in decreased STAT1 phosphorylation and ubiquitin-mediated proteasome-dependent STAT1 degradation, leading to decreased IFN-stimulated gene transcription. Interacts with host STAT3; this interaction constitutively activates STAT3. Interacts with host LTBR receptor. Interacts with host TNFRSF1A receptor and possibly induces apoptosis. Interacts with host HNRPK. Interacts with host YWHAE. Interacts with host UBE3A/E6AP. Interacts with host DDX3X. Interacts with host APOA2. Interacts with host RXRA protein. Interacts with host SP110 isoform 3/Sp110b; this interaction sequesters the transcriptional corepressor SP110 away from the nucleus. Interacts with host CREB3 nuclear transcription protein; this interaction triggers cell transformation. Interacts with host ACY3. Interacts with host C1QR1. Interacts with host RBM24; this interaction, which enhances the interaction of the mature core protein with 5'-UTR, may inhibit viral translation and favor replication. Interacts with host EIF2AK2/PKR; this interaction induces the autophosphorylation of EIF2AK2. Part of the viral assembly initiation complex composed of NS2, E1, E2, NS3, NS4A, NS5A and the mature core protein. As to quaternary structure, forms a heterodimer with envelope glycoprotein E2. Interacts with mature core protein. Interacts with protease NS2. The heterodimer E1/E2 interacts with host CLDN1; this interaction plays a role in viral entry into host cell. Interacts with host SPSB2 (via C-terminus). Part of the viral assembly initiation complex composed of NS2, E1, E2, NS3, NS4A, NS5A and the mature core protein. Interacts with host NEURL3; this interaction prevents E1 binding to glycoprotein E2. In terms of assembly, forms a heterodimer with envelope glycoprotein E1. Interacts with host CD81 and SCARB1 receptors; these interactions play a role in viral entry into host cell. Interacts with host EIF2AK2/PKR; this interaction inhibits EIF2AK2 and probably allows the virus to evade the innate immune response. Interacts with host CD209/DC-SIGN and CLEC4M/DC-SIGNR. Interact with host SPCS1; this interaction is essential for viral particle assembly. Interacts with protease NS2. The heterodimer E1/E2 interacts with host CLDN1; this interaction plays a role in viral entry into host cell. Part of the viral assembly initiation complex composed of NS2, E1, E2, NS3, NS4A, NS5A and the mature core protein. Interacts with host SLC3A2/4F2hc; the interaction may facilitate viral entry into host cell. Interacts with human PLSCR1. Homohexamer. Homoheptamer. Interacts with protease NS2. As to quaternary structure, homodimer. Interacts with host SPCS1; this interaction is essential for viral particle assembly. Interacts with envelope glycoprotein E1. Interacts with envelope glycoprotein E2. Interacts with viroporin p7. Interacts with serine protease/helicase NS3. Part of the replication complex composed of NS2, NS3, NS4A, NS4B, NS5A and the RNA-directed RNA polymerase embedded in an ER-derived membranous web. Part of the viral assembly initiation complex composed of NS2, E1, E2, NS3, NS4A, NS5A and the mature core protein. In terms of assembly, interacts with protease NS2. Interacts with non-structural protein 4A; this interaction stabilizes the folding of NS3 serine protease. NS3-NS4A interaction is essential for NS3 activation and allows membrane anchorage of the latter. NS3/NS4A complex also prevents phosphorylation of host IRF3, thus preventing the establishment of dsRNA induced antiviral state. Interacts with host MAVS; this interaction leads to the cleavage and inhibition of host MAVS. Interacts with host TICAM1; this interaction leads to the cleavage and inhibition of host TICAM1. Interacts with host TANK-binding kinase/TBK1; this interaction results in the inhibition of the association between TBK1 and IRF3, which leads to the inhibition of IRF3 activation. Interacts with host RBM24. Part of the replication complex composed of NS2, NS3, NS4A, NS4B, NS5A and the RNA-directed RNA polymerase embedded in an ER-derived membranous web. Part of the viral assembly initiation complex composed of NS2, E1, E2, NS3, NS4A, NS5A and the mature core protein. Interacts with NS3 serine protease; this interaction stabilizes the folding of NS3 serine protease. NS3-NS4A interaction is essential for NS3 activation and allows membrane anchorage of the latter. Interacts with non-structural protein 5A (via N-terminus). Part of the replication complex composed of NS2, NS3, NS4A, NS4B, NS5A and the RNA-directed RNA polymerase embedded in an ER-derived membranous web. Part of the viral assembly initiation complex composed of NS2, E1, E2, NS3, NS4A, NS5A and the mature core protein. As to quaternary structure, homomultimer. Interacts with non-structural protein NS5A. Interacts with host PLA2G4C; this interaction likely initiates the recruitment of replication complexes to lipid droplets. Interacts with host STING; this interaction disrupts the interaction between STING and TBK1 thereby suppressing the interferon signaling. Part of the replication complex composed of NS2, NS3, NS4A, NS4B, NS5A and the RNA-directed RNA polymerase embedded in an ER-derived membranous web. In terms of assembly, monomer. Homodimer; dimerization is required for RNA-binding. Interacts with the mature core protein. Interacts (via N-terminus) with non-structural protein 4A. Interacts with non-structural protein 4B. Interacts with RNA-directed RNA polymerase. Part of the viral assembly initiation complex composed of NS2, E1, E2, NS3, NS4A, NS5A and the mature core protein. Part of the replication complex composed of NS2, NS3, NS4A, NS4B, NS5A and the RNA-directed RNA polymerase. Interacts with host GRB2. Interacts with host BIN1. Interacts with host PIK3R1. Interacts with host SRCAP. Interacts with host FKBP8. Interacts with host VAPB. Interacts with host EIF2AK2/PKR; this interaction leads to disruption of EIF2AK2 dimerization by NS5A and probably allows the virus to evade the innate immune response. Interacts (via N-terminus) with host PACSIN2 (via N-terminus); this interaction attenuates protein kinase C alpha-mediated phosphorylation of PACSIN2 by disrupting the interaction between PACSIN2 and PRKCA. Interacts (via N-terminus) with host SRC kinase (via SH2 domain). Interacts with most Src-family kinases. Interacts with host IFI27 and SKP2; promotes the ubiquitin-mediated proteasomal degradation of NS5A. Interacts with host GPS2. Interacts with host TNFRSF21; this interaction allows the modulation by the virus of JNK, p38 MAPK, STAT3, and Akt signaling pathways in a DR6-dependent manner. Interacts (via N-terminus) with host CIDEB (via N-terminus); this interaction seems to regulate the association of HCV particles with APOE. Interacts with host CHKA/Choline Kinase-alpha; CHKA bridges host PI4KA and NS5A and potentiates NS5A-stimulated PI4KA activity, which then facilitates the targeting of the ternary complex to the ER for viral replication. Interacts with host SPSB2 (via C-terminus); this interaction targets NS5A for ubiquitination and degradation. Interacts with host RAB18; this interaction may promote the association of NS5A and other replicase components with lipid droplets. Interacts (via region D2) with host PPIA/CYPA; the interaction stimulates RNA-binding ability of NS5A and is dependent on the peptidyl-prolyl cis-trans isomerase activity of PPIA/CYPA. Interacts with host TRIM14; this interaction induces the degradation of NS5A. Homooligomer. Interacts with non-structural protein 5A. Interacts with host VAPB. Interacts with host PRK2/PKN2. Interacts with host HNRNPA1 and SEPT6; these interactions facilitate the viral replication. Part of the replication complex composed of NS2, NS3, NS4A, NS4B, NS5A and the RNA-directed RNA polymerase. The cofactor is Zn(2+). Requires Mg(2+) as cofactor. Post-translationally, specific enzymatic cleavages in vivo yield mature proteins. The structural proteins, core, E1, E2 and p7 are produced by proteolytic processing by host signal peptidases. The core protein is synthesized as a 23 kDa precursor which is retained in the ER membrane through the hydrophobic signal peptide. Cleavage by the signal peptidase releases the 21 kDa mature core protein. The cleavage of the core protein precursor occurs between aminoacids 176 and 188 but the exact cleavage site is not known. Some degraded forms of the core protein appear as well during the course of infection. The other proteins (p7, NS2, NS3, NS4A, NS4B, NS5A and NS5B) are cleaved by the viral proteases. Autoprocessing between NS2 and NS3 is mediated by the NS2 cysteine protease catalytic domain and regulated by the NS3 N-terminal domain. Phosphorylated by host PKC and PKA. In terms of processing, ubiquitinated; mediated by UBE3A and leading to core protein subsequent proteasomal degradation. Post-translationally, highly N-glycosylated. Palmitoylation is required for NS2/3 autoprocessing and E2 recruitment to membranes. In terms of processing, palmitoylated. This modification may play a role in its polymerization or in protein-protein interactions. Post-translationally, cleaved by host caspases which are probably activated by the viral infection. Ubiquitinated. Ubiquitination, most probably at Lys-2350, mediated by host IFI27 and SKP2 leads to proteasomal degradation, restricting viral infection. In terms of processing, phosphorylated on serines in a basal form termed p56. p58 is a hyperphosphorylated form of p56. p56 and p58 coexist in the cell in roughly equivalent amounts. Hyperphosphorylation is dependent on the presence of NS4A. Host CSNK1A1/CKI-alpha or RPS6KB1 kinases may be responsible for NS5A phosphorylation. Phosphorylated NS5A is involved in viral replication. Post-translationally, tyrosine phosphorylation is essential for the interaction with host SRC. The N-terminus is phosphorylated by host PRK2/PKN2.

The protein localises to the host endoplasmic reticulum membrane. The protein resides in the host mitochondrion membrane. It is found in the virion. It localises to the host cytoplasm. Its subcellular location is the host nucleus. The protein localises to the host lipid droplet. The protein resides in the virion membrane. It is found in the host mitochondrion. It localises to the host cell membrane. Its subcellular location is the host perinuclear region. It catalyses the reaction Hydrolysis of four peptide bonds in the viral precursor polyprotein, commonly with Asp or Glu in the P6 position, Cys or Thr in P1 and Ser or Ala in P1'.. The enzyme catalyses a ribonucleoside 5'-triphosphate + H2O = a ribonucleoside 5'-diphosphate + phosphate + H(+). The catalysed reaction is ATP + H2O = ADP + phosphate + H(+). It carries out the reaction RNA(n) + a ribonucleoside 5'-triphosphate = RNA(n+1) + diphosphate. Its activity is regulated as follows. Inhibited by the antiviral drug hexamethylene amiloride. Inhibition by amantadine appears to be genotype-dependent. Also inhibited by long-alkyl-chain iminosugar derivatives. Activity is up-regulated by PRK2/PKN2-mediated phosphorylation. Functionally, packages viral RNA to form a viral nucleocapsid, and promotes virion budding. Participates in the viral particle production as a result of its interaction with the non-structural protein 5A. Binds RNA and may function as a RNA chaperone to induce the RNA structural rearrangements taking place during virus replication. Modulates viral translation initiation by interacting with viral IRES and 40S ribosomal subunit. Affects various cell signaling pathways, host immunity and lipid metabolism. Prevents the establishment of cellular antiviral state by blocking the interferon-alpha/beta (IFN-alpha/beta) and IFN-gamma signaling pathways and by blocking the formation of phosphorylated STAT1 and promoting ubiquitin-mediated proteasome-dependent degradation of STAT1. Activates STAT3 leading to cellular transformation. Regulates the activity of cellular genes, including c-myc and c-fos. May repress the promoter of p53, and sequester CREB3 and SP110 isoform 3/Sp110b in the cytoplasm. Represses cell cycle negative regulating factor CDKN1A, thereby interrupting an important check point of normal cell cycle regulation. Targets transcription factors involved in the regulation of inflammatory responses and in the immune response: suppresses NF-kappa-B activation, and activates AP-1. Binds to dendritic cells (DCs) via C1QR1, resulting in down-regulation of T-lymphocytes proliferation. Alters lipid metabolism by interacting with hepatocellular proteins involved in lipid accumulation and storage. Induces up-regulation of FAS promoter activity, and thereby contributes to the increased triglyceride accumulation in hepatocytes (steatosis). Its function is as follows. Forms a heterodimer with envelope glycoprotein E2, which mediates virus attachment to the host cell, virion internalization through clathrin-dependent endocytosis and fusion with host membrane. Fusion with the host cell is most likely mediated by both E1 and E2, through conformational rearrangements of the heterodimer required for fusion rather than a classical class II fusion mechanism. E1/E2 heterodimer binds host apolipoproteins such as APOB and APOE thereby forming a lipo-viro-particle (LVP). APOE associated to the LVP allows the initial virus attachment to cell surface receptors such as the heparan sulfate proteoglycans (HSPGs), syndecan-1 (SDC1), syndecan-1 (SDC2), the low-density lipoprotein receptor (LDLR) and scavenger receptor class B type I (SCARB1). The cholesterol transfer activity of SCARB1 allows E2 exposure and binding of E2 to SCARB1 and the tetraspanin CD81. E1/E2 heterodimer binding on CD81 activates the epithelial growth factor receptor (EGFR) signaling pathway. Diffusion of the complex E1-E2-EGFR-SCARB1-CD81 to the cell lateral membrane allows further interaction with Claudin 1 (CLDN1) and occludin (OCLN) to finally trigger HCV entry. Forms a heterodimer with envelope glycoprotein E1, which mediates virus attachment to the host cell, virion internalization through clathrin-dependent endocytosis and fusion with host membrane. Fusion with the host cell is most likely mediated by both E1 and E2, through conformational rearrangements of the heterodimer required for fusion rather than a classical class II fusion mechanism. The interaction between envelope glycoprotein E2 and host apolipoprotein E/APOE allows the proper assembly, maturation and infectivity of the viral particles. This interaction is probably promoted via the up-regulation of cellular autophagy by the virus. E1/E2 heterodimer binds host apolipoproteins such as APOB and APOE thereby forming a lipo-viro-particle (LVP). APOE associated to the LVP allows the initial virus attachment to cell surface receptors such as the heparan sulfate proteoglycans (HSPGs), syndecan-1 (SDC1), syndecan-1 (SDC2), the low-density lipoprotein receptor (LDLR) and scavenger receptor class B type I (SCARB1). The cholesterol transfer activity of SCARB1 allows E2 exposure and binding of E2 to SCARB1 and the tetraspanin CD81. E1/E2 heterodimer binding on CD81 activates the epithelial growth factor receptor (EGFR) signaling pathway. Diffusion of the complex E1-E2-EGFR-SCARB1-CD81 to the cell lateral membrane allows further interaction with Claudin 1 (CLDN1) and occludin (OCLN) to finally trigger HCV entry. Inhibits host EIF2AK2/PKR activation, preventing the establishment of an antiviral state. Viral ligand for CD209/DC-SIGN and CLEC4M/DC-SIGNR, which are respectively found on dendritic cells (DCs), and on liver sinusoidal endothelial cells and macrophage-like cells of lymph node sinuses. These interactions allow the capture of circulating HCV particles by these cells and subsequent facilitated transmission to permissive cells such as hepatocytes and lymphocyte subpopulations. The interaction between E2 and host amino acid transporter complex formed by SLC3A2 and SLC7A5/LAT1 may facilitate viral entry into host cell. In terms of biological role, ion channel protein that acts as a viroporin and plays an essential role in the assembly, envelopment and secretion of viral particles. Regulates the host cell secretory pathway, which induces the intracellular retention of viral glycoproteins and favors assembly of viral particles. Creates a pore in acidic organelles and releases Ca(2+) and H(+) in the cytoplasm of infected cells, leading to a productive viral infection. High levels of cytoplasmic Ca(2+) may trigger membrane trafficking and transport of viral ER-associated proteins to viroplasms, sites of viral genome replication. This ionic imbalance induces the assembly of the inflammasome complex, which triggers the maturation of pro-IL-1beta into IL-1beta through the action of caspase-1. Targets also host mitochondria and induces mitochondrial depolarization. In addition of its role as a viroporin, acts as a lipid raft adhesion factor. Functionally, cysteine protease required for the proteolytic auto-cleavage between the non-structural proteins NS2 and NS3. The N-terminus of NS3 is required for the function of NS2 protease (active region NS2-3). Promotes the initiation of viral particle assembly by mediating the interaction between structural and non-structural proteins. Its function is as follows. Displays three enzymatic activities: serine protease with a chymotrypsin-like fold, NTPase and RNA helicase. NS3 serine protease, in association with NS4A, is responsible for the cleavages of NS3-NS4A, NS4A-NS4B, NS4B-NS5A and NS5A-NS5B. The NS3/NS4A complex prevents phosphorylation of host IRF3, thus preventing the establishment of dsRNA induced antiviral state. The NS3/NS4A complex induces host amino acid transporter component SLC3A2, thus contributing to HCV propagation. NS3 RNA helicase binds to RNA and unwinds both dsDNA and dsRNA in the 3' to 5' direction, and likely resolves RNA complicated stable secondary structures in the template strand. Binds a single ATP and catalyzes the unzipping of a single base pair of dsRNA. Inhibits host antiviral proteins TBK1 and IRF3 thereby preventing the establishment of an antiviral state. Cleaves host MAVS/CARDIF thereby preventing the establishment of an antiviral state. Cleaves host TICAM1/TRIF, thereby disrupting TLR3 signaling and preventing the establishment of an antiviral state. Peptide cofactor which forms a non-covalent complex with the N-terminal of NS3 serine protease. The NS3/NS4A complex prevents phosphorylation of host IRF3, thus preventing the establishment of dsRNA induced antiviral state. The NS3/NS4A complex induces host amino acid transporter component SLC3A2, thus contributing to HCV propagation. In terms of biological role, induces a specific membrane alteration that serves as a scaffold for the virus replication complex. This membrane alteration gives rise to the so-called ER-derived membranous web that contains the replication complex. NS4B self-interaction contributes to its function in membranous web formation. Promotes host TRIF protein degradation in a CASP8-dependent manner thereby inhibiting host TLR3-mediated interferon signaling. Disrupts the interaction between STING and TBK1 contributing to the inhibition of interferon signaling. Functionally, phosphorylated protein that is indispensable for viral replication and assembly. Both hypo- and hyperphosphorylated states are required for the viral life cycle. The hyperphosphorylated form of NS5A is an inhibitor of viral replication. Involved in RNA-binding and especially in binding to the viral genome. Zinc is essential for RNA-binding. Participates in the viral particle production as a result of its interaction with the mature viral core protein. Its interaction with host VAPB may target the viral replication complex to vesicles. Down-regulates viral IRES translation initiation. Mediates interferon resistance, presumably by interacting with and inhibiting host EIF2AK2/PKR. Prevents BIN1-induced apoptosis. Acts as a transcriptional activator of some host genes important for viral replication when localized in the nucleus. Via the interaction with host PACSIN2, modulates lipid droplet formation in order to promote virion assembly. Modulates TNFRSF21/DR6 signaling pathway for viral propagation. Its function is as follows. RNA-dependent RNA polymerase that performs primer-template recognition and RNA synthesis during viral replication. Initiates RNA transcription/replication at a flavin adenine dinucleotide (FAD), resulting in a 5'- FAD cap on viral RNAs. In this way, recognition of viral 5' RNA by host pattern recognition receptors can be bypassed, thereby evading activation of antiviral pathways. The polypeptide is Genome polyprotein (Hepatitis C virus genotype 1b (isolate Japanese) (HCV)).